We begin with the raw amino-acid sequence, 439 residues long: Xylose isomerase (439 aa).

Active-site residues include H103 and D106. Residues E234, E270, H273, D298, D309, D311, and D341 each coordinate Mg(2+).

It belongs to the xylose isomerase family. In terms of assembly, homotetramer. Requires Mg(2+) as cofactor.

Its subcellular location is the cytoplasm. The enzyme catalyses alpha-D-xylose = alpha-D-xylulofuranose. The polypeptide is Xylose isomerase (Bacteroides fragilis (strain ATCC 25285 / DSM 2151 / CCUG 4856 / JCM 11019 / LMG 10263 / NCTC 9343 / Onslow / VPI 2553 / EN-2)).